Consider the following 419-residue polypeptide: MGTETEYLQSIQQALKSLTTAANNCQLTYTHAVGQDVHSLCAREAVRKTLVLEAYKFLQIAQGPVDAAVTCFEQTAHLASVRALLEAGVFEVLPTDGTPRTMKEVAEKLDVDESLLARLMRHASLYGPLEETGPGSYRHTPFSLVYLRPEIRGMVRFAMDEHMPAHLKLHEYLQQTSWTAPSSSTNNPYTHAHSITGTSMFANLSAPSNKHRLDAFNDAMTVQATTAIWMIDLFPFHEVLSPSASADTVLAVDIGGGTGRAISRIRSLAGNLPGRYILQDQAHVISNLPSPSPSSYLDGIETMTHDFFTPQPVAGAQIYLIRRCLHNWPEESVIRILRNIVPAMARTNSRLLIEEIIVPESNSGIEEGWMDMIMMALGAKQRTLEEWKGVLGTAGLEVVTVYRVDGICHGLIEARVKSE.

Residues 255 to 256, Asp-280, 306 to 307, and Arg-323 each bind S-adenosyl-L-methionine; these read GG and DF. The active-site Proton acceptor is the His-326.

Belongs to the class I-like SAM-binding methyltransferase superfamily. Cation-independent O-methyltransferase family. S-adenosyl-L-methionine is required as a cofactor.

Its pathway is secondary metabolite biosynthesis. In terms of biological role, non-reducing polyketide synthase; part of the gene cluster that mediates the biosynthesis of the bicoumarin desertorin. The non-reducing polyketide synthase desS first catalyzes the formation of the pentaketidic 4,7-dihydroxy-5-methylcoumarin from acetyl coenzyme A and 4 malonyl coenzyme A molecules. Further O-methylation by desB leads to the formation of 7-demethylsiderin. Then, an oxidative phenol coupling catalyzed by the cytochrome P450 monooxygenase desC forms the 6,8'-dimer M-desertorin A via dimerization the monomeric precursor, 7-demethylsiderin. M-desertorin A is further converted to M-desertorin C. This chain is O-methyltransferase desB, found in Aspergillus desertorum (Emericella desertorum).